A 70-amino-acid polypeptide reads, in one-letter code: DNA gyrase inhibitor YacG (70 aa).

Residues cysteine 9, cysteine 12, cysteine 28, and cysteine 32 each contribute to the Zn(2+) site. Positions 43–70 are disordered; it reads ESRKIPGSSIDPESIVTTNNKQDNVDEQ.

This sequence belongs to the DNA gyrase inhibitor YacG family. In terms of assembly, interacts with GyrB. It depends on Zn(2+) as a cofactor.

Its function is as follows. Inhibits all the catalytic activities of DNA gyrase by preventing its interaction with DNA. Acts by binding directly to the C-terminal domain of GyrB, which probably disrupts DNA binding by the gyrase. This Legionella pneumophila (strain Corby) protein is DNA gyrase inhibitor YacG.